Consider the following 399-residue polypeptide: Ribonuclease D (399 aa).

One can recognise a 3'-5' exonuclease domain in the interval 31 to 197; the sequence is RVVTDNTALL…PLYHILEKEL (167 aa). The HRDC domain occupies 239 to 318; the sequence is NPLELSRLRV…SQARRISSND (80 aa).

This sequence belongs to the RNase D family. A divalent metal cation serves as cofactor.

The protein localises to the cytoplasm. It carries out the reaction Exonucleolytic cleavage that removes extra residues from the 3'-terminus of tRNA to produce 5'-mononucleotides.. Exonuclease involved in the 3' processing of various precursor tRNAs. Initiates hydrolysis at the 3'-terminus of an RNA molecule and releases 5'-mononucleotides. This Haemophilus influenzae (strain ATCC 51907 / DSM 11121 / KW20 / Rd) protein is Ribonuclease D.